The following is a 201-amino-acid chain: 3-isopropylmalate dehydratase small subunit (201 aa).

It belongs to the LeuD family. LeuD type 1 subfamily. As to quaternary structure, heterodimer of LeuC and LeuD.

The enzyme catalyses (2R,3S)-3-isopropylmalate = (2S)-2-isopropylmalate. It functions in the pathway amino-acid biosynthesis; L-leucine biosynthesis; L-leucine from 3-methyl-2-oxobutanoate: step 2/4. Its function is as follows. Catalyzes the isomerization between 2-isopropylmalate and 3-isopropylmalate, via the formation of 2-isopropylmaleate. The polypeptide is 3-isopropylmalate dehydratase small subunit (Xanthobacter autotrophicus (strain ATCC BAA-1158 / Py2)).